The chain runs to 359 residues: Epoxide hydrolase 4 (359 aa).

A helical; Signal-anchor for type II membrane protein membrane pass occupies residues alanine 15–leucine 35. An AB hydrolase-1 domain is found at proline 92–glutamine 337. The Nucleophile role is filled by aspartate 167. The Proton donor role is filled by tyrosine 279. Residue histidine 334 is the Proton acceptor of the active site.

It belongs to the AB hydrolase superfamily. Epoxide hydrolase family.

The protein resides in the membrane. The chain is Epoxide hydrolase 4 (Ephx4) from Mus musculus (Mouse).